We begin with the raw amino-acid sequence, 268 residues long: 3-deoxy-manno-octulosonate cytidylyltransferase (268 aa).

This sequence belongs to the KdsB family.

Its subcellular location is the cytoplasm. It carries out the reaction 3-deoxy-alpha-D-manno-oct-2-ulosonate + CTP = CMP-3-deoxy-beta-D-manno-octulosonate + diphosphate. Its pathway is nucleotide-sugar biosynthesis; CMP-3-deoxy-D-manno-octulosonate biosynthesis; CMP-3-deoxy-D-manno-octulosonate from 3-deoxy-D-manno-octulosonate and CTP: step 1/1. It functions in the pathway bacterial outer membrane biogenesis; lipopolysaccharide biosynthesis. Its function is as follows. Activates KDO (a required 8-carbon sugar) for incorporation into bacterial lipopolysaccharide in Gram-negative bacteria. The polypeptide is 3-deoxy-manno-octulosonate cytidylyltransferase (Psychrobacter cryohalolentis (strain ATCC BAA-1226 / DSM 17306 / VKM B-2378 / K5)).